A 483-amino-acid polypeptide reads, in one-letter code: PAT complex subunit CCDC47 (483 aa).

The first 20 residues, 1-20, serve as a signal peptide directing secretion; the sequence is MKAFHTFCVVLLVFGSVSEA. The Cytoplasmic segment spans residues 21–135; sequence KFDDFEDEED…PAHLQNSWES (115 aa). A disordered region spans residues 46 to 118; it reads MEDSVTESPQ…PDTSSSKNKD (73 aa). A compositionally biased stretch (acidic residues) spans 60 to 104; that stretch reads TEDDEDETTVELEGQDENQEGDFEDADTQEGDTESEPYDDEEFEG. Residues 105 to 118 are compositionally biased toward basic and acidic residues; that stretch reads YEDKPDTSSSKNKD. Residues 136–155 traverse the membrane as a helical segment; that stretch reads YYLEILMVTGLLAYIMNYII. Over 156-483 the chain is Lumenal; sequence GKNKNSRLAQ…KMKQIKVKAM (328 aa). Residue asparagine 178 is glycosylated (N-linked (GlcNAc...) asparagine). Positions 424–483 are disordered; it reads QRQEAAQSRREEKKRAEKERIMNEEDPEKQRRLEEAALRREQKKLEKKQMKMKQIKVKAM. Basic and acidic residues predominate over residues 430–472; it reads QSRREEKKRAEKERIMNEEDPEKQRRLEEAALRREQKKLEKKQ. Residues 450 to 483 adopt a coiled-coil conformation; sequence PEKQRRLEEAALRREQKKLEKKQMKMKQIKVKAM. The segment covering 473 to 483 has biased composition (basic residues); that stretch reads MKMKQIKVKAM.

This sequence belongs to the CCDC47 family. As to quaternary structure, component of the PAT complex, composed of WDR83OS/Asterix and CCDC47. The PAT complex is part of the multi-pass translocon (MPT) complex, composed of three subcomplexes, the GEL complex (composed of RAB5IF/OPTI and TMCO1), the BOS complex (composed of NCLN/Nicalin, NOMO and TMEM147) and the PAT complex (composed of WDR83OS/Asterix and CCDC47). The MPT complex associates with the SEC61 complex. Interacts with VCP, HSPA5, DERL1, DERL2 and SELENOS.

It is found in the endoplasmic reticulum membrane. It localises to the rough endoplasmic reticulum membrane. Its function is as follows. Component of the multi-pass translocon (MPT) complex that mediates insertion of multi-pass membrane proteins into the lipid bilayer of membranes. The MPT complex takes over after the SEC61 complex: following membrane insertion of the first few transmembrane segments of proteins by the SEC61 complex, the MPT complex occludes the lateral gate of the SEC61 complex to promote insertion of subsequent transmembrane regions. Within the MPT complex, the PAT subcomplex sequesters any highly polar regions in the transmembrane domains away from the non-polar membrane environment until they can be buried in the interior of the fully assembled protein. Within the PAT subcomplex, CCDC47 occludes the lateral gate of the SEC61 complex. Involved in the regulation of calcium ion homeostasis in the ER. Required for proper protein degradation via the ERAD (ER-associated degradation) pathway. Has an essential role in the maintenance of ER organization during embryogenesis. The sequence is that of PAT complex subunit CCDC47 from Homo sapiens (Human).